The primary structure comprises 358 residues: MTTTIRSGRLSGWESFCNWVTSTNNRIYVGWFGVLMVPTLLAAAICFTIAFIAAPPVDIDGIREPVAGSFLYGNNIISGAVVPSSNAIGLHFYPIWEAASVDEWLYNGGPYQLVVFHFLIGICCWLGRQWELSYRLGMRPWICVAYSAPLSAAFAVFLIYPVGQGSFSDGMPLGISGTFNFMLVFQAEHNILMHPFHMIGVAGMFGGSLFSAMHGSLVTSSLIRETTETESQNYGYKFGQEEETYNIVAAHGYFGRLIFQYASFNNSRSLHFFLAAWPVICIWITSLGISTMAFNLNGFNFNQSVLDAQGRVVPTWADVLNRSNLGMEVMHERNAHNFPLDLAAAESTPVALIAPAIG.

Transmembrane regions (helical) follow at residues tyrosine 28–isoleucine 45, histidine 117–leucine 132, and tryptophan 141–alanine 155. Residue histidine 117 participates in chlorophyll a binding. Tryptophan 125 is a binding site for pheophytin a. Residues aspartate 169 and glutamate 188 each coordinate [CaMn4O5] cluster. A helical membrane pass occupies residues phenylalanine 196–leucine 217. Histidine 197 provides a ligand contact to chlorophyll a. Residues histidine 214 and serine 263–phenylalanine 264 contribute to the a quinone site. Residue histidine 214 participates in Fe cation binding. Position 271 (histidine 271) interacts with Fe cation. A helical transmembrane segment spans residues phenylalanine 273–leucine 287. [CaMn4O5] cluster-binding residues include histidine 331, glutamate 332, aspartate 341, and alanine 343. A propeptide spanning residues alanine 344–glycine 358 is cleaved from the precursor.

This sequence belongs to the reaction center PufL/M/PsbA/D family. PSII is composed of 1 copy each of membrane proteins PsbA, PsbB, PsbC, PsbD, PsbE, PsbF, PsbH, PsbI, PsbJ, PsbK, PsbL, PsbM, PsbT, PsbX, PsbY, Psb30/Ycf12, peripheral proteins PsbO, CyanoQ (PsbQ), PsbU, PsbV and a large number of cofactors. It forms dimeric complexes. The cofactor is The D1/D2 heterodimer binds P680, chlorophylls that are the primary electron donor of PSII, and subsequent electron acceptors. It shares a non-heme iron and each subunit binds pheophytin, quinone, additional chlorophylls, carotenoids and lipids. D1 provides most of the ligands for the Mn4-Ca-O5 cluster of the oxygen-evolving complex (OEC). There is also a Cl(-1) ion associated with D1 and D2, which is required for oxygen evolution. The PSII complex binds additional chlorophylls, carotenoids and specific lipids.. Post-translationally, tyr-160 forms a radical intermediate that is referred to as redox-active TyrZ, YZ or Y-Z. In terms of processing, C-terminally processed by CtpA; processing is essential to allow assembly of the oxygen-evolving complex and thus photosynthetic growth.

The protein resides in the cellular thylakoid membrane. It catalyses the reaction 2 a plastoquinone + 4 hnu + 2 H2O = 2 a plastoquinol + O2. Its function is as follows. Photosystem II (PSII) is a light-driven water:plastoquinone oxidoreductase that uses light energy to abstract electrons from H(2)O, generating O(2) and a proton gradient subsequently used for ATP formation. It consists of a core antenna complex that captures photons, and an electron transfer chain that converts photonic excitation into a charge separation. The D1/D2 (PsbA/PsbD) reaction center heterodimer binds P680, the primary electron donor of PSII as well as several subsequent electron acceptors. This chain is Photosystem II protein D1, found in Prochlorococcus marinus (strain MIT 9313).